The chain runs to 184 residues: Ribosome maturation factor RimP (184 aa).

The protein belongs to the RimP family.

It localises to the cytoplasm. Functionally, required for maturation of 30S ribosomal subunits. This Corynebacterium diphtheriae (strain ATCC 700971 / NCTC 13129 / Biotype gravis) protein is Ribosome maturation factor RimP.